The chain runs to 689 residues: Glycine--tRNA ligase beta subunit (689 aa).

The protein belongs to the class-II aminoacyl-tRNA synthetase family. Tetramer of two alpha and two beta subunits.

Its subcellular location is the cytoplasm. The catalysed reaction is tRNA(Gly) + glycine + ATP = glycyl-tRNA(Gly) + AMP + diphosphate. In Desulforapulum autotrophicum (strain ATCC 43914 / DSM 3382 / VKM B-1955 / HRM2) (Desulfobacterium autotrophicum), this protein is Glycine--tRNA ligase beta subunit.